We begin with the raw amino-acid sequence, 430 residues long: UPF0597 protein CV_1824 (430 aa).

The protein belongs to the UPF0597 family.

The chain is UPF0597 protein CV_1824 from Chromobacterium violaceum (strain ATCC 12472 / DSM 30191 / JCM 1249 / CCUG 213 / NBRC 12614 / NCIMB 9131 / NCTC 9757 / MK).